The primary structure comprises 413 residues: Type IV pilus assembly protein TapC (413 aa).

The next 4 helical transmembrane spans lie at 180-200 (YPAM…LFVI), 227-247 (FMQH…FLYV), 286-306 (LSTT…AAGA), and 386-406 (IMVV…LPIF).

The protein belongs to the GSP F family.

The protein resides in the cell inner membrane. Involved in the translocation of the type IV pilin. In Aeromonas hydrophila, this protein is Type IV pilus assembly protein TapC (tapC).